Here is an 855-residue protein sequence, read N- to C-terminus: Protein translocase subunit SecA (855 aa).

ATP contacts are provided by residues Gln85, 103-107 (GEGKT), and Asp492. Residues 794–845 (AAIHEESSSAAAPGPGQNQPGGPGGPSAGPVAPVRNLDKHGRNELCPCGSGK) are disordered. Positions 801–811 (SSAAAPGPGQN) are enriched in low complexity. Positions 839, 841, 850, and 851 each coordinate Zn(2+).

This sequence belongs to the SecA family. Monomer and homodimer. Part of the essential Sec protein translocation apparatus which comprises SecA, SecYEG and auxiliary proteins SecDF. Other proteins may also be involved. Zn(2+) is required as a cofactor.

It localises to the cell membrane. The protein resides in the cytoplasm. It carries out the reaction ATP + H2O + cellular proteinSide 1 = ADP + phosphate + cellular proteinSide 2.. Part of the Sec protein translocase complex. Interacts with the SecYEG preprotein conducting channel. Has a central role in coupling the hydrolysis of ATP to the transfer of proteins into and across the cell membrane, serving as an ATP-driven molecular motor driving the stepwise translocation of polypeptide chains across the membrane. This chain is Protein translocase subunit SecA, found in Clostridium beijerinckii (strain ATCC 51743 / NCIMB 8052) (Clostridium acetobutylicum).